Here is a 392-residue protein sequence, read N- to C-terminus: Histidinol-phosphate aminotransferase 2 (392 aa).

Lysine 228 carries the N6-(pyridoxal phosphate)lysine modification.

Belongs to the class-II pyridoxal-phosphate-dependent aminotransferase family. Histidinol-phosphate aminotransferase subfamily. As to quaternary structure, homodimer. It depends on pyridoxal 5'-phosphate as a cofactor.

It catalyses the reaction L-histidinol phosphate + 2-oxoglutarate = 3-(imidazol-4-yl)-2-oxopropyl phosphate + L-glutamate. The protein operates within amino-acid biosynthesis; L-histidine biosynthesis; L-histidine from 5-phospho-alpha-D-ribose 1-diphosphate: step 7/9. This Nitrosospira multiformis (strain ATCC 25196 / NCIMB 11849 / C 71) protein is Histidinol-phosphate aminotransferase 2.